The sequence spans 152 residues: Large ribosomal subunit protein uL22 (152 aa).

The protein belongs to the universal ribosomal protein uL22 family. Part of the 50S ribosomal subunit.

This protein binds specifically to 23S rRNA. It makes multiple contacts with different domains of the 23S rRNA in the assembled 50S subunit and ribosome. Functionally, the globular domain of the protein is located near the polypeptide exit tunnel on the outside of the subunit, while an extended beta-hairpin is found that lines the wall of the exit tunnel in the center of the 70S ribosome. This is Large ribosomal subunit protein uL22 from Methanothrix thermoacetophila (strain DSM 6194 / JCM 14653 / NBRC 101360 / PT) (Methanosaeta thermophila).